We begin with the raw amino-acid sequence, 110 residues long: Mitochondrial pyruvate carrier 1 (110 aa).

A run of 2 helical transmembrane segments spans residues 20-36 (HFWGPIANWGFVAAGLV) and 44-61 (MISGNMSSAMCVYSALFM).

Belongs to the mitochondrial pyruvate carrier (MPC) (TC 2.A.105) family.

The protein localises to the mitochondrion inner membrane. Mediates the uptake of pyruvate into mitochondria. This chain is Mitochondrial pyruvate carrier 1, found in Arabidopsis thaliana (Mouse-ear cress).